A 140-amino-acid polypeptide reads, in one-letter code: Large ribosomal subunit protein uL16 (140 aa).

Belongs to the universal ribosomal protein uL16 family. In terms of assembly, part of the 50S ribosomal subunit.

Functionally, binds 23S rRNA and is also seen to make contacts with the A and possibly P site tRNAs. The sequence is that of Large ribosomal subunit protein uL16 from Phytoplasma mali (strain AT).